Here is a 239-residue protein sequence, read N- to C-terminus: Orotidine 5'-phosphate decarboxylase (239 aa).

Residues D10, K32, D59–T68, T122, R184, Q193, G213, and R214 contribute to the substrate site. K61 (proton donor) is an active-site residue.

This sequence belongs to the OMP decarboxylase family. Type 1 subfamily. In terms of assembly, homodimer.

It catalyses the reaction orotidine 5'-phosphate + H(+) = UMP + CO2. It participates in pyrimidine metabolism; UMP biosynthesis via de novo pathway; UMP from orotate: step 2/2. Functionally, catalyzes the decarboxylation of orotidine 5'-monophosphate (OMP) to uridine 5'-monophosphate (UMP). This is Orotidine 5'-phosphate decarboxylase from Geobacillus thermodenitrificans (strain NG80-2).